A 212-amino-acid polypeptide reads, in one-letter code: Thymidylate kinase (212 aa).

15–22 (GIDGAGKS) provides a ligand contact to ATP.

This sequence belongs to the thymidylate kinase family.

The enzyme catalyses dTMP + ATP = dTDP + ADP. Its function is as follows. Phosphorylation of dTMP to form dTDP in both de novo and salvage pathways of dTTP synthesis. This is Thymidylate kinase from Chromobacterium violaceum (strain ATCC 12472 / DSM 30191 / JCM 1249 / CCUG 213 / NBRC 12614 / NCIMB 9131 / NCTC 9757 / MK).